A 106-amino-acid polypeptide reads, in one-letter code: Nucleoid-associated protein XCV1128 (106 aa).

Residues 81 to 106 (IDAESKDRMGSATAGMQLPPGMKLPF) are disordered.

It belongs to the YbaB/EbfC family. In terms of assembly, homodimer.

It is found in the cytoplasm. The protein resides in the nucleoid. Binds to DNA and alters its conformation. May be involved in regulation of gene expression, nucleoid organization and DNA protection. The chain is Nucleoid-associated protein XCV1128 from Xanthomonas euvesicatoria pv. vesicatoria (strain 85-10) (Xanthomonas campestris pv. vesicatoria).